Here is a 386-residue protein sequence, read N- to C-terminus: Probable mannan endo-1,4-beta-mannosidase A (386 aa).

The first 21 residues, 1–21 (MKLNPSLLTAAGLVSAQLASA), serve as a signal peptide directing secretion. The substrate site is built by tryptophan 95 and asparagine 207. The Proton donor role is filled by glutamate 208. A substrate-binding site is contributed by tyrosine 283. Glutamate 316 serves as the catalytic Nucleophile. The N-linked (GlcNAc...) asparagine glycan is linked to asparagine 336. Tryptophan 346 contributes to the substrate binding site.

Belongs to the glycosyl hydrolase 5 (cellulase A) family.

Its subcellular location is the secreted. The enzyme catalyses Random hydrolysis of (1-&gt;4)-beta-D-mannosidic linkages in mannans, galactomannans and glucomannans.. Functionally, endo-1,4-mannanase, a crucial enzyme for depolymerization of seed galactomannans and wood galactoglucomannans. This is Probable mannan endo-1,4-beta-mannosidase A (manA) from Aspergillus flavus (strain ATCC 200026 / FGSC A1120 / IAM 13836 / NRRL 3357 / JCM 12722 / SRRC 167).